Reading from the N-terminus, the 293-residue chain is Ribosomal protein L11 methyltransferase (293 aa).

S-adenosyl-L-methionine-binding residues include Thr-145, Gly-166, Asp-188, and Asn-230.

This sequence belongs to the methyltransferase superfamily. PrmA family.

The protein resides in the cytoplasm. It carries out the reaction L-lysyl-[protein] + 3 S-adenosyl-L-methionine = N(6),N(6),N(6)-trimethyl-L-lysyl-[protein] + 3 S-adenosyl-L-homocysteine + 3 H(+). Methylates ribosomal protein L11. The polypeptide is Ribosomal protein L11 methyltransferase (Shewanella halifaxensis (strain HAW-EB4)).